Consider the following 124-residue polypeptide: Photoactive yellow protein (124 aa).

The 64-residue stretch at alanine 22–glycine 85 folds into the PAS domain. Cysteine 68 is subject to S-(4-hydroxycinnamyl)cysteine.

Belongs to the photoactive yellow protein family. In terms of processing, the 4-hydroxycinnamic acid (p-coumaric acid) chromophore is covalently bound via a thioester linkage.

Functionally, this photoactive protein is a photoreceptor with kinetics similar to that of rhodopsin. The chain is Photoactive yellow protein (pyp) from Cereibacter sphaeroides (strain ATCC 17023 / DSM 158 / JCM 6121 / CCUG 31486 / LMG 2827 / NBRC 12203 / NCIMB 8253 / ATH 2.4.1.) (Rhodobacter sphaeroides).